We begin with the raw amino-acid sequence, 163 residues long: Probable chemoreceptor glutamine deamidase CheD (163 aa).

Belongs to the CheD family.

The catalysed reaction is L-glutaminyl-[protein] + H2O = L-glutamyl-[protein] + NH4(+). Its function is as follows. Probably deamidates glutamine residues to glutamate on methyl-accepting chemotaxis receptors (MCPs), playing an important role in chemotaxis. The sequence is that of Probable chemoreceptor glutamine deamidase CheD from Borreliella afzelii (strain PKo) (Borrelia afzelii).